A 155-amino-acid polypeptide reads, in one-letter code: Large ribosomal subunit protein uL22c (155 aa).

It belongs to the universal ribosomal protein uL22 family. In terms of assembly, part of the 50S ribosomal subunit.

The protein resides in the plastid. The protein localises to the chloroplast. Functionally, this protein binds specifically to 23S rRNA. In terms of biological role, the globular domain of the protein is located near the polypeptide exit tunnel on the outside of the subunit, while an extended beta-hairpin is found that lines the wall of the exit tunnel in the center of the 70S ribosome. The polypeptide is Large ribosomal subunit protein uL22c (rpl22) (Atropa belladonna (Belladonna)).